The following is a 283-amino-acid chain: 4-diphosphocytidyl-2-C-methyl-D-erythritol kinase (283 aa).

K12 is an active-site residue. An ATP-binding site is contributed by 94 to 104 (PAQAGLGGGSS). D136 is a catalytic residue.

The protein belongs to the GHMP kinase family. IspE subfamily.

It carries out the reaction 4-CDP-2-C-methyl-D-erythritol + ATP = 4-CDP-2-C-methyl-D-erythritol 2-phosphate + ADP + H(+). It participates in isoprenoid biosynthesis; isopentenyl diphosphate biosynthesis via DXP pathway; isopentenyl diphosphate from 1-deoxy-D-xylulose 5-phosphate: step 3/6. In terms of biological role, catalyzes the phosphorylation of the position 2 hydroxy group of 4-diphosphocytidyl-2C-methyl-D-erythritol. The protein is 4-diphosphocytidyl-2-C-methyl-D-erythritol kinase of Acidovorax sp. (strain JS42).